The primary structure comprises 151 residues: 3-hydroxyacyl-[acyl-carrier-protein] dehydratase FabZ (151 aa).

The active site involves histidine 57.

It belongs to the thioester dehydratase family. FabZ subfamily.

It localises to the cytoplasm. It carries out the reaction a (3R)-hydroxyacyl-[ACP] = a (2E)-enoyl-[ACP] + H2O. In terms of biological role, involved in unsaturated fatty acids biosynthesis. Catalyzes the dehydration of short chain beta-hydroxyacyl-ACPs and long chain saturated and unsaturated beta-hydroxyacyl-ACPs. The chain is 3-hydroxyacyl-[acyl-carrier-protein] dehydratase FabZ from Synechococcus sp. (strain CC9605).